Consider the following 583-residue polypeptide: Chromosomal replication initiator protein DnaA (583 aa).

The domain I, interacts with DnaA modulators stretch occupies residues 1-91 (MNAENLDPAT…SPMFPAFKVM (91 aa)). 2 disordered regions span residues 86–179 (PAFK…QQPV) and 197–232 (VAGFGPSVAGTTAPQYPPQSEMQGSFTPGVTGNYRD). Residues 91–235 (MPPAQPEPQT…VTGNYRDPVT (145 aa)) are domain II. Positions 97 to 106 (EPQTTASPED) are enriched in polar residues. 2 stretches are compositionally biased toward basic and acidic residues: residues 126-135 (EDSRTPRHSA) and 147-174 (QEREDSAVHMARPDEQTAESHREPEHEP). Positions 205–226 (AGTTAPQYPPQSEMQGSFTPGV) are enriched in polar residues. Residues 236–460 (HLNSNDTFDT…GALKRVIAMA (225 aa)) form a domain III, AAA+ region region. 4 residues coordinate ATP: Gly280, Gly282, Lys283, and Thr284. The segment at 461–583 (SLNHQPVTRA…TVELKQHLND (123 aa)) is domain IV, binds dsDNA.

The protein belongs to the DnaA family. As to quaternary structure, oligomerizes as a right-handed, spiral filament on DNA at oriC.

It localises to the cytoplasm. Its function is as follows. Plays an essential role in the initiation and regulation of chromosomal replication. ATP-DnaA binds to the origin of replication (oriC) to initiate formation of the DNA replication initiation complex once per cell cycle. Binds the DnaA box (a 9 base pair repeat at the origin) and separates the double-stranded (ds)DNA. Forms a right-handed helical filament on oriC DNA; dsDNA binds to the exterior of the filament while single-stranded (ss)DNA is stabiized in the filament's interior. The ATP-DnaA-oriC complex binds and stabilizes one strand of the AT-rich DNA unwinding element (DUE), permitting loading of DNA polymerase. After initiation quickly degrades to an ADP-DnaA complex that is not apt for DNA replication. Binds acidic phospholipids. This chain is Chromosomal replication initiator protein DnaA, found in Bifidobacterium animalis subsp. lactis (strain AD011).